Consider the following 235-residue polypeptide: UPF0714 protein YmaC (235 aa).

The chain crosses the membrane as a helical span at residues 5–24; that stretch reads LLNVILVLAIVLFLRYVHYS.

It belongs to the UPF0714 family.

It is found in the cell membrane. In Bacillus subtilis (strain 168), this protein is UPF0714 protein YmaC (ymaC).